Here is a 403-residue protein sequence, read N- to C-terminus: Ribosomal RNA large subunit methyltransferase I (403 aa).

The region spanning 9–88 is the PUA domain; sequence YPRLVLSKGR…ESIDIAFFTR (80 aa).

This sequence belongs to the methyltransferase superfamily. RlmI family.

It localises to the cytoplasm. The enzyme catalyses cytidine(1962) in 23S rRNA + S-adenosyl-L-methionine = 5-methylcytidine(1962) in 23S rRNA + S-adenosyl-L-homocysteine + H(+). Functionally, specifically methylates the cytosine at position 1962 (m5C1962) of 23S rRNA. This is Ribosomal RNA large subunit methyltransferase I from Salmonella choleraesuis (strain SC-B67).